A 243-amino-acid polypeptide reads, in one-letter code: L-fucose operon activator (243 aa).

The HTH deoR-type domain maps to 1–57 (MKAARQQAIVDLLLNHTSLTTEALSEQLKVSKETIRRDLNELQTQGKILRNHGRAKY). The segment at residues 19–38 (LTTEALSEQLKVSKETIRRD) is a DNA-binding region (H-T-H motif).

Its function is as follows. Transcriptional activator of the fuc operon. The protein is L-fucose operon activator (fucR) of Escherichia coli (strain K12).